The primary structure comprises 351 residues: tRNA pseudouridine synthase D (351 aa).

Asp-96 functions as the Nucleophile in the catalytic mechanism. The TRUD domain occupies 174-304 (GAPNYFGPQR…MKPERRPLVA (131 aa)). Positions 244-268 (VLPGEPEPSGAGPTGPLWGDGGTLA) are disordered.

The protein belongs to the pseudouridine synthase TruD family.

It carries out the reaction uridine(13) in tRNA = pseudouridine(13) in tRNA. In terms of biological role, responsible for synthesis of pseudouridine from uracil-13 in transfer RNAs. This Marinobacter nauticus (strain ATCC 700491 / DSM 11845 / VT8) (Marinobacter aquaeolei) protein is tRNA pseudouridine synthase D.